The sequence spans 396 residues: S-adenosylmethionine synthase 2 (396 aa).

Glu13 lines the Mg(2+) pocket. His19 serves as a coordination point for ATP. Glu47 serves as a coordination point for K(+). L-methionine-binding residues include Glu60 and Gln103. Residues 171 to 173, 239 to 242, Asp250, 256 to 257, Ala273, Lys277, and Lys281 contribute to the ATP site; these read DGK, SGRF, and RK. Asp250 provides a ligand contact to L-methionine. Residue Lys281 coordinates L-methionine.

This sequence belongs to the AdoMet synthase family. Homotetramer. Requires Mn(2+) as cofactor. Mg(2+) is required as a cofactor. It depends on Co(2+) as a cofactor. The cofactor is K(+). In terms of tissue distribution, expressed in roots, stems and leaves (at protein level).

The protein resides in the cytoplasm. It catalyses the reaction L-methionine + ATP + H2O = S-adenosyl-L-methionine + phosphate + diphosphate. It functions in the pathway amino-acid biosynthesis; S-adenosyl-L-methionine biosynthesis; S-adenosyl-L-methionine from L-methionine: step 1/1. Catalyzes the formation of S-adenosylmethionine from methionine and ATP. The reaction comprises two steps that are both catalyzed by the same enzyme: formation of S-adenosylmethionine (AdoMet) and triphosphate, and subsequent hydrolysis of the triphosphate. May be involved in the synthesis of betain in response to abiotic stress such as high salinity. This Atriplex nummularia (Old man saltbush) protein is S-adenosylmethionine synthase 2 (SAMS2).